The primary structure comprises 292 residues: MQSAHYTGRFAPSPSGPLHAGSLVAAMASYLDARAHQGRWLLRMEDVDEARTVQGAAQDIAASLSQLGMHWDGPVLVQSRRQQHYQRACAQLGERVYACGCTRKEIADSRLGMAADGAAIYPGTCRSGLAAGKRAHALRVRVPEPGQALEQIDFEDRWQGWQRQHLASAVGDFVLRRADGFWAYQLAVVVDDAEQGVTHIVRGADLLGSTARQIYLQSLLGYPTPTYLHLPLVTHADGEKLSKQNGAQALNLNRSLTLLHEAARFLGLEVARVDGVAAFWELAVLAWRRRYL.

Residues 9–13 (RFAPS) and Glu45 contribute to the L-glutamate site. A 'HIGH' region motif is present at residues 12–22 (PSPSGPLHAGS). Positions 99, 101, 121, and 125 each coordinate Zn(2+). L-glutamate is bound by residues Tyr184 and Arg202. The 'KMSKS' region motif lies at 240–244 (KLSKQ). Lys243 lines the ATP pocket.

This sequence belongs to the class-I aminoacyl-tRNA synthetase family. GluQ subfamily. The cofactor is Zn(2+).

Its function is as follows. Catalyzes the tRNA-independent activation of glutamate in presence of ATP and the subsequent transfer of glutamate onto a tRNA(Asp). Glutamate is transferred on the 2-amino-5-(4,5-dihydroxy-2-cyclopenten-1-yl) moiety of the queuosine in the wobble position of the QUC anticodon. This chain is Glutamyl-Q tRNA(Asp) synthetase, found in Verminephrobacter eiseniae (strain EF01-2).